The following is a 325-amino-acid chain: 5-dehydro-2-deoxygluconokinase (325 aa).

It belongs to the carbohydrate kinase PfkB family.

The catalysed reaction is 5-dehydro-2-deoxy-D-gluconate + ATP = 6-phospho-5-dehydro-2-deoxy-D-gluconate + ADP + H(+). The protein operates within polyol metabolism; myo-inositol degradation into acetyl-CoA; acetyl-CoA from myo-inositol: step 5/7. Functionally, catalyzes the phosphorylation of 5-dehydro-2-deoxy-D-gluconate (2-deoxy-5-keto-D-gluconate or DKG) to 6-phospho-5-dehydro-2-deoxy-D-gluconate (DKGP). This Listeria monocytogenes serotype 4b (strain CLIP80459) protein is 5-dehydro-2-deoxygluconokinase.